The chain runs to 402 residues: Endo-polygalacturonase (402 aa).

The N-terminal stretch at 1 to 23 (MEYQSGKRVLSLSLGLIGLFSAS) is a signal peptide. Asp249 functions as the Proton donor in the catalytic mechanism. Residue His277 is part of the active site.

Belongs to the glycosyl hydrolase 28 family. As to quaternary structure, monomer.

It localises to the secreted. The catalysed reaction is (1,4-alpha-D-galacturonosyl)n+m + H2O = (1,4-alpha-D-galacturonosyl)n + (1,4-alpha-D-galacturonosyl)m.. Functionally, involved in maceration and soft-rotting of plant tissue. The sequence is that of Endo-polygalacturonase (peh) from Pectobacterium carotovorum subsp. carotovorum (Erwinia carotovora subsp. carotovora).